Consider the following 351-residue polypeptide: L-threonine 3-dehydrogenase (351 aa).

Cysteine 39 contacts Zn(2+). Catalysis depends on charge relay system residues threonine 41 and histidine 44. Zn(2+) is bound by residues histidine 64, glutamate 65, cysteine 94, cysteine 97, cysteine 100, and cysteine 108. Residues isoleucine 176, aspartate 196, arginine 201, 271–273, and 295–296 contribute to the NAD(+) site; these read LGI and IY.

It belongs to the zinc-containing alcohol dehydrogenase family. Homotetramer. Zn(2+) is required as a cofactor.

The protein localises to the cytoplasm. It carries out the reaction L-threonine + NAD(+) = (2S)-2-amino-3-oxobutanoate + NADH + H(+). Its pathway is amino-acid degradation; L-threonine degradation via oxydo-reductase pathway; glycine from L-threonine: step 1/2. Its function is as follows. Catalyzes the NAD(+)-dependent oxidation of L-threonine to 2-amino-3-ketobutyrate. This chain is L-threonine 3-dehydrogenase, found in Francisella tularensis subsp. mediasiatica (strain FSC147).